The sequence spans 157 residues: Endoribonuclease YbeY (157 aa).

Zn(2+)-binding residues include H114, H118, and H124.

Belongs to the endoribonuclease YbeY family. Zn(2+) serves as cofactor.

The protein localises to the cytoplasm. Functionally, single strand-specific metallo-endoribonuclease involved in late-stage 70S ribosome quality control and in maturation of the 3' terminus of the 16S rRNA. In Yersinia pseudotuberculosis serotype O:3 (strain YPIII), this protein is Endoribonuclease YbeY.